Here is a 542-residue protein sequence, read N- to C-terminus: Plasminogen-binding protein PgbB (542 aa).

The segment at 399–542 is disordered; it reads KSASKKSQKG…RRKALEMNKK (144 aa). 2 stretches are compositionally biased toward basic and acidic residues: residues 418 to 435 and 447 to 456; these read QERH…ENKV and VKTRRPEPIR. A compositionally biased stretch (polar residues) spans 457 to 467; it reads DQNNATQQGET. The span at 481–542 shows a compositional bias: basic and acidic residues; that stretch reads NAAKKEVPKP…RRKALEMNKK (62 aa).

It is found in the cell surface. Its function is as follows. Binds plasminogen, specifically, and in a concentration and lysine-dependent manner. Plasminogen is the precursor of plasmin, a serine protease that cleaves fibrin, fibronectin, laminin and vitronectin. Acquisition of plasminogen/plasmin could enable H.pylori to degrade host components. This is Plasminogen-binding protein PgbB (pgbB) from Helicobacter pylori (strain ATCC 700392 / 26695) (Campylobacter pylori).